The primary structure comprises 226 residues: MKSLKRLIKSNKKKGDKKNVSFMDWDEPPSYSDSRYGCYPSAPLFGVDEMMETLPTLGIQSLKIQYKCSLQVRAETPFTSFNDAARCISLWETDYRGYAGKKPFYRLLMLIATKKLRAAPMSLMDGNRPEYSSMIQGQSIVHHSLGVIPPMMHVPETFTREWNLLTNKGMITAQIWLGITDVVDDLNPLINPALFSDEKEMTLTSQMFGLELKKRNDNTWLISKSY.

A dynamin binding motif is present at residues 2–4; it reads KSL. A PPXY motif motif is present at residues 28–31; it reads PPSY. Residues 40 to 43 carry the PTAP/PSAP motif motif; it reads PSAP.

Belongs to the vesiculoviruses matrix protein family. As to quaternary structure, homomultimer. Interacts with viral nucleocapsid; this interaction contributes to the virion assembly. Interacts with the viral envelope glycoprotein; this interaction contributes to the virion assembly. Interacts with host RAE1-NUP98 complex. Interacts with host NEDD4 and TSG101. Interacts with host dynamin. Interacts with host NDUFAF4; the interaction inhibits viral propagation and is independent of interferon activation. Interacts with host GTF2H5; the interaction may inhibit host transcription. Phosphorylated by host.

Its subcellular location is the virion. It is found in the host endomembrane system. The protein localises to the host nucleus membrane. The protein resides in the host nucleus. It localises to the host cytoplasm. Forms a double layer around the helical nucleocapsid, the inner matrix layer binding to the N helix and the outer matrix layer binding to the envelope glycoprotein. Plays a major role in assembly and budding of virion, by recruiting cellular partners of the ESCRT complexes that play a key role in releasing the budding particle from the host membrane. Condensates the ribonucleocapsid core during virus assembly. Inhibits the host mRNA nuclear export thereby inducing the shut off of cellular transcription and preventing the interferon signaling and the establishment of antiviral state in infected cells. This shutoff presumably inhibits interferon signaling and thus establishment of antiviral state in virus infected cells. Induces cell-rounding, cytoskeleton disorganization and apoptosis in infected cell. Inhibits host transcription, possibly through interaction with host DNA repair factor IIH/TFIIH GTF2H5 subunit. This is Matrix protein (M) from Isfahan virus (ISFV).